We begin with the raw amino-acid sequence, 268 residues long: Ribosomal RNA large subunit methyltransferase E (268 aa).

The interval 1-60 (MKPPRSRSGSSKDTGPKRIPGKALKSASNPGENDATLDSATARTARNKTVSLRTARGRTT) is disordered. Polar residues predominate over residues 26-52 (SASNPGENDATLDSATARTARNKTVSL). S-adenosyl-L-methionine is bound by residues glycine 115, tryptophan 117, aspartate 133, aspartate 149, and aspartate 173. Lysine 213 functions as the Proton acceptor in the catalytic mechanism.

This sequence belongs to the class I-like SAM-binding methyltransferase superfamily. RNA methyltransferase RlmE family.

Its subcellular location is the cytoplasm. The catalysed reaction is uridine(2552) in 23S rRNA + S-adenosyl-L-methionine = 2'-O-methyluridine(2552) in 23S rRNA + S-adenosyl-L-homocysteine + H(+). Functionally, specifically methylates the uridine in position 2552 of 23S rRNA at the 2'-O position of the ribose in the fully assembled 50S ribosomal subunit. The polypeptide is Ribosomal RNA large subunit methyltransferase E (Gluconobacter oxydans (strain 621H) (Gluconobacter suboxydans)).